A 285-amino-acid chain; its full sequence is UPF0703 protein YcgQ (285 aa).

4 helical membrane-spanning segments follow: residues 4–24, 34–54, 89–109, and 210–230; these read LLVLMGFTFFFYHLHASGNLT, LSFIAIFLLAILTAVQAYLFI, LIYVVFLFPLVSGIFFPIATL, and FVLRFGIIHCIADSGVYGMLV.

The protein belongs to the UPF0703 family.

It localises to the cell membrane. In Bacillus subtilis (strain 168), this protein is UPF0703 protein YcgQ (ycgQ).